Reading from the N-terminus, the 277-residue chain is Large ribosomal subunit protein uL2 (277 aa).

Disordered stretches follow at residues 35–58 and 213–277; these read QPLP…GGGH and WKGI…RKRK.

The protein belongs to the universal ribosomal protein uL2 family. As to quaternary structure, part of the 50S ribosomal subunit. Forms a bridge to the 30S subunit in the 70S ribosome.

In terms of biological role, one of the primary rRNA binding proteins. Required for association of the 30S and 50S subunits to form the 70S ribosome, for tRNA binding and peptide bond formation. It has been suggested to have peptidyltransferase activity; this is somewhat controversial. Makes several contacts with the 16S rRNA in the 70S ribosome. The polypeptide is Large ribosomal subunit protein uL2 (Staphylococcus carnosus (strain TM300)).